A 296-amino-acid polypeptide reads, in one-letter code: Acetylglutamate kinase (296 aa).

Residues Gly-69 to Gly-70, Arg-91, and Asn-193 contribute to the substrate site.

Belongs to the acetylglutamate kinase family. ArgB subfamily.

The protein localises to the cytoplasm. It catalyses the reaction N-acetyl-L-glutamate + ATP = N-acetyl-L-glutamyl 5-phosphate + ADP. It participates in amino-acid biosynthesis; L-arginine biosynthesis; N(2)-acetyl-L-ornithine from L-glutamate: step 2/4. Functionally, catalyzes the ATP-dependent phosphorylation of N-acetyl-L-glutamate. This Delftia acidovorans (strain DSM 14801 / SPH-1) protein is Acetylglutamate kinase.